The following is a 165-amino-acid chain: Cyclic pyranopterin monophosphate synthase (165 aa).

Residues 76 to 78 and 114 to 115 each bind substrate; these read LCH and ME. Asp129 is a catalytic residue.

The protein belongs to the MoaC family. In terms of assembly, homohexamer; trimer of dimers.

It catalyses the reaction (8S)-3',8-cyclo-7,8-dihydroguanosine 5'-triphosphate = cyclic pyranopterin phosphate + diphosphate. The protein operates within cofactor biosynthesis; molybdopterin biosynthesis. In terms of biological role, catalyzes the conversion of (8S)-3',8-cyclo-7,8-dihydroguanosine 5'-triphosphate to cyclic pyranopterin monophosphate (cPMP). This chain is Cyclic pyranopterin monophosphate synthase, found in Brucella melitensis biotype 2 (strain ATCC 23457).